Reading from the N-terminus, the 346-residue chain is DNA primase small subunit PriS (346 aa).

Catalysis depends on residues Asp97, Asp99, and Asp280.

The protein belongs to the eukaryotic-type primase small subunit family. Heterodimer of a small subunit (PriS) and a large subunit (PriL). The cofactor is Mg(2+). Requires Mn(2+) as cofactor.

Its function is as follows. Catalytic subunit of DNA primase, an RNA polymerase that catalyzes the synthesis of short RNA molecules used as primers for DNA polymerase during DNA replication. The small subunit contains the primase catalytic core and has DNA synthesis activity on its own. Binding to the large subunit stabilizes and modulates the activity, increasing the rate of DNA synthesis while decreasing the length of the DNA fragments, and conferring RNA synthesis capability. The DNA polymerase activity may enable DNA primase to also catalyze primer extension after primer synthesis. May also play a role in DNA repair. The chain is DNA primase small subunit PriS from Thermococcus kodakarensis (strain ATCC BAA-918 / JCM 12380 / KOD1) (Pyrococcus kodakaraensis (strain KOD1)).